Reading from the N-terminus, the 103-residue chain is Large ribosomal subunit protein bL21 (103 aa).

Belongs to the bacterial ribosomal protein bL21 family. Part of the 50S ribosomal subunit. Contacts protein L20.

In terms of biological role, this protein binds to 23S rRNA in the presence of protein L20. The protein is Large ribosomal subunit protein bL21 of Klebsiella pneumoniae (strain 342).